A 509-amino-acid chain; its full sequence is Maturase K (509 aa).

This sequence belongs to the intron maturase 2 family. MatK subfamily.

It localises to the plastid. Its subcellular location is the chloroplast. Usually encoded in the trnK tRNA gene intron. Probably assists in splicing its own and other chloroplast group II introns. The chain is Maturase K from Anthocercis viscosa (Sticky tailflower).